Here is a 355-residue protein sequence, read N- to C-terminus: Protein RecA (355 aa).

Residue 67–74 coordinates ATP; it reads GPESSGKT. The interval 336 to 355 is disordered; sequence NSAASDYEDNENEEMNNEEF. The span at 341-355 shows a compositional bias: acidic residues; it reads DYEDNENEEMNNEEF.

This sequence belongs to the RecA family.

It is found in the cytoplasm. Functionally, can catalyze the hydrolysis of ATP in the presence of single-stranded DNA, the ATP-dependent uptake of single-stranded DNA by duplex DNA, and the ATP-dependent hybridization of homologous single-stranded DNAs. It interacts with LexA causing its activation and leading to its autocatalytic cleavage. The polypeptide is Protein RecA (Photorhabdus laumondii subsp. laumondii (strain DSM 15139 / CIP 105565 / TT01) (Photorhabdus luminescens subsp. laumondii)).